The following is a 447-amino-acid chain: Cysteine--tRNA ligase (447 aa).

Cys-28 is a Zn(2+) binding site. The short motif at 30–40 is the 'HIGH' region element; it reads PTVYNYIHVGN. Zn(2+)-binding residues include Cys-211, His-236, and Glu-240. The 'KMSKS' region signature appears at 268–272; it reads KMSKS. ATP is bound at residue Lys-271.

Belongs to the class-I aminoacyl-tRNA synthetase family. In terms of assembly, monomer. The cofactor is Zn(2+).

The protein localises to the cytoplasm. The catalysed reaction is tRNA(Cys) + L-cysteine + ATP = L-cysteinyl-tRNA(Cys) + AMP + diphosphate. The chain is Cysteine--tRNA ligase from Streptococcus pneumoniae (strain ATCC BAA-255 / R6).